Here is a 300-residue protein sequence, read N- to C-terminus: tRNA pseudouridine synthase B (300 aa).

The active-site Nucleophile is Asp-41.

Belongs to the pseudouridine synthase TruB family. Type 1 subfamily.

The catalysed reaction is uridine(55) in tRNA = pseudouridine(55) in tRNA. Responsible for synthesis of pseudouridine from uracil-55 in the psi GC loop of transfer RNAs. The protein is tRNA pseudouridine synthase B of Synechococcus sp. (strain WH7803).